The primary structure comprises 250 residues: Hydroxyethylthiazole kinase (250 aa).

Residue methionine 39 coordinates substrate. Residues arginine 114 and threonine 159 each contribute to the ATP site. Glycine 186 is a binding site for substrate.

This sequence belongs to the Thz kinase family. Mg(2+) serves as cofactor.

The catalysed reaction is 5-(2-hydroxyethyl)-4-methylthiazole + ATP = 4-methyl-5-(2-phosphooxyethyl)-thiazole + ADP + H(+). The protein operates within cofactor biosynthesis; thiamine diphosphate biosynthesis; 4-methyl-5-(2-phosphoethyl)-thiazole from 5-(2-hydroxyethyl)-4-methylthiazole: step 1/1. Catalyzes the phosphorylation of the hydroxyl group of 4-methyl-5-beta-hydroxyethylthiazole (THZ). This Lactococcus lactis subsp. cremoris (strain MG1363) protein is Hydroxyethylthiazole kinase.